A 930-amino-acid polypeptide reads, in one-letter code: G patch domain-containing protein 1 (930 aa).

Residues methionine 1–leucine 12 are compositionally biased toward acidic residues. Disordered regions lie at residues methionine 1–aspartate 41 and glycine 170–aspartate 209. Alanine 2 carries the N-acetylalanine modification. Phosphoserine is present on residues serine 6 and serine 8. A G-patch domain is found at lysine 152–glycine 198. Lysine 313 is covalently cross-linked (Glycyl lysine isopeptide (Lys-Gly) (interchain with G-Cter in SUMO2)). Serine 358 is modified (phosphoserine). 4 disordered regions span residues glycine 400–glycine 420, serine 465–serine 486, serine 566–serine 596, and proline 654–glutamine 930. Over residues serine 465 to serine 478 the composition is skewed to low complexity. Basic and acidic residues-rich tracts occupy residues glutamate 582–aspartate 593 and glycine 674–serine 695. At serine 715 the chain carries Phosphoserine. Positions serine 719–valine 737 are enriched in basic and acidic residues. The span at serine 768 to aspartate 777 shows a compositional bias: acidic residues. Residues lysine 851–asparagine 886 show a composition bias toward basic residues. Residues serine 894 to serine 903 show a composition bias toward low complexity. The span at arginine 921–glutamine 930 shows a compositional bias: basic residues.

Belongs to the GPATCH1 family.

This is G patch domain-containing protein 1 (Gpatch1) from Mus musculus (Mouse).